A 104-amino-acid polypeptide reads, in one-letter code: Protein SMALL AUXIN UP-REGULATED RNA 9 (104 aa).

This sequence belongs to the ARG7 family. As to quaternary structure, interacts with and inhibits PP2C-D subfamily of type 2C phosphatases such as PP2C67/PP2C-D1. As to expression, expressed in etiolated hypocotyls, petioles, leaves and flowers.

The protein localises to the cell membrane. Provide a mechanistic link between auxin and plasma membrane H(+)-ATPases (PM H(+)-ATPases, e.g. AHA1 and AHA2), and triggers PM H(+)-ATPases activity by promoting phosphorylation of their C-terminal autoinhibitory domain as a result of PP2C-D subfamily of type 2C phosphatases inhibition, thus leading to the acidification of the apoplast and the facilitation of solutes and water uptake to drive cell expansion. Triggers plant growth probably by promoting cell elongation. Regulates branch angles and bending. Probably involved in light intensity mediated root development. This is Protein SMALL AUXIN UP-REGULATED RNA 9 from Arabidopsis thaliana (Mouse-ear cress).